The chain runs to 278 residues: Complement C1q tumor necrosis factor-related protein 6 (278 aa).

The N-terminal stretch at 1–46 (MQWLRVRESPGEATGHRVTMGTAALGPVWAALLLFLLMCEIPMVEL) is a signal peptide. A glycan (N-linked (GlcNAc...) asparagine) is linked at N91. The Collagen-like domain occupies 97–138 (GDKGDPGPMGLPGYMGREGPQGEPGPQGSKGDKGEMGSPGAP). Residues 99-135 (KGDPGPMGLPGYMGREGPQGEPGPQGSKGDKGEMGSP) form a disordered region. Residues 139 to 259 (CQKRFFAFSV…KRQRENAIYS (121 aa)) enclose the C1q domain.

Its subcellular location is the secreted. This Homo sapiens (Human) protein is Complement C1q tumor necrosis factor-related protein 6 (C1QTNF6).